Reading from the N-terminus, the 157-residue chain is Immediate-early protein ICP-18 (157 aa).

The protein is Immediate-early protein ICP-18 of Frog virus 3 (isolate Goorha) (FV-3).